The chain runs to 164 residues: Peptidyl-prolyl cis-trans isomerase A-like 4H (164 aa).

A PPIase cyclophilin-type domain is found at 7–163 (FFDITVDGKP…KKITIADCGQ (157 aa)). N-linked (GlcNAc...) asparagine glycosylation is found at Asn71 and Asn108.

Belongs to the cyclophilin-type PPIase family. PPIase A subfamily.

It localises to the cytoplasm. The enzyme catalyses [protein]-peptidylproline (omega=180) = [protein]-peptidylproline (omega=0). In terms of biological role, PPIases accelerate the folding of proteins. It catalyzes the cis-trans isomerization of proline imidic peptide bonds in oligopeptides. This is Peptidyl-prolyl cis-trans isomerase A-like 4H from Homo sapiens (Human).